The following is a 172-amino-acid chain: Adenine phosphoribosyltransferase (172 aa).

The protein belongs to the purine/pyrimidine phosphoribosyltransferase family. Homodimer.

The protein localises to the cytoplasm. The enzyme catalyses AMP + diphosphate = 5-phospho-alpha-D-ribose 1-diphosphate + adenine. It participates in purine metabolism; AMP biosynthesis via salvage pathway; AMP from adenine: step 1/1. Functionally, catalyzes a salvage reaction resulting in the formation of AMP, that is energically less costly than de novo synthesis. The sequence is that of Adenine phosphoribosyltransferase from Roseiflexus sp. (strain RS-1).